The chain runs to 123 residues: Large ribosomal subunit protein bL12 (123 aa).

Belongs to the bacterial ribosomal protein bL12 family. Homodimer. Part of the ribosomal stalk of the 50S ribosomal subunit. Forms a multimeric L10(L12)X complex, where L10 forms an elongated spine to which 2 to 4 L12 dimers bind in a sequential fashion. Binds GTP-bound translation factors.

In terms of biological role, forms part of the ribosomal stalk which helps the ribosome interact with GTP-bound translation factors. Is thus essential for accurate translation. The protein is Large ribosomal subunit protein bL12 of Metamycoplasma arthritidis (strain 158L3-1) (Mycoplasma arthritidis).